The sequence spans 138 residues: Large ribosomal subunit protein bL19 (138 aa).

The protein belongs to the bacterial ribosomal protein bL19 family.

This protein is located at the 30S-50S ribosomal subunit interface and may play a role in the structure and function of the aminoacyl-tRNA binding site. This is Large ribosomal subunit protein bL19 from Leptospira interrogans serogroup Icterohaemorrhagiae serovar copenhageni (strain Fiocruz L1-130).